We begin with the raw amino-acid sequence, 185 residues long: Translation initiation factor IF-3 (185 aa).

Belongs to the IF-3 family. In terms of assembly, monomer.

The protein localises to the cytoplasm. Its function is as follows. IF-3 binds to the 30S ribosomal subunit and shifts the equilibrium between 70S ribosomes and their 50S and 30S subunits in favor of the free subunits, thus enhancing the availability of 30S subunits on which protein synthesis initiation begins. This chain is Translation initiation factor IF-3, found in Rickettsia typhi (strain ATCC VR-144 / Wilmington).